The chain runs to 101 residues: Chaperone modulatory protein CbpM (101 aa).

This sequence belongs to the CbpM family.

Functionally, interacts with CbpA and inhibits both the DnaJ-like co-chaperone activity and the DNA binding activity of CbpA. Together with CbpA, modulates the activity of the DnaK chaperone system. Does not inhibit the co-chaperone activity of DnaJ. The polypeptide is Chaperone modulatory protein CbpM (Pseudomonas putida (strain ATCC 700007 / DSM 6899 / JCM 31910 / BCRC 17059 / LMG 24140 / F1)).